The sequence spans 241 residues: 3-dehydroquinate dehydratase (241 aa).

Residues 35 to 37 and Arg-70 each bind 3-dehydroquinate; that span reads ELR. Catalysis depends on His-133, which acts as the Proton donor/acceptor. Lys-160 acts as the Schiff-base intermediate with substrate in catalysis. The 3-dehydroquinate site is built by Arg-202 and Gln-225.

This sequence belongs to the type-I 3-dehydroquinase family. In terms of assembly, homodimer.

It carries out the reaction 3-dehydroquinate = 3-dehydroshikimate + H2O. It participates in metabolic intermediate biosynthesis; chorismate biosynthesis; chorismate from D-erythrose 4-phosphate and phosphoenolpyruvate: step 3/7. In terms of biological role, involved in the third step of the chorismate pathway, which leads to the biosynthesis of aromatic amino acids. Catalyzes the cis-dehydration of 3-dehydroquinate (DHQ) and introduces the first double bond of the aromatic ring to yield 3-dehydroshikimate. This is 3-dehydroquinate dehydratase from Staphylococcus haemolyticus (strain JCSC1435).